A 541-amino-acid chain; its full sequence is Chaperonin GroEL (541 aa).

ATP-binding positions include 29 to 32, 86 to 90, Gly413, 477 to 479, and Asp493; these read TLGP, DGTTT, and DAL.

Belongs to the chaperonin (HSP60) family. As to quaternary structure, forms a cylinder of 14 subunits composed of two heptameric rings stacked back-to-back. Interacts with the co-chaperonin GroES.

The protein resides in the cytoplasm. The enzyme catalyses ATP + H2O + a folded polypeptide = ADP + phosphate + an unfolded polypeptide.. In terms of biological role, together with its co-chaperonin GroES, plays an essential role in assisting protein folding. The GroEL-GroES system forms a nano-cage that allows encapsulation of the non-native substrate proteins and provides a physical environment optimized to promote and accelerate protein folding. The polypeptide is Chaperonin GroEL (Clostridium botulinum (strain 657 / Type Ba4)).